The following is a 158-amino-acid chain: NADH-quinone oxidoreductase subunit B (158 aa).

4 residues coordinate [4Fe-4S] cluster: C37, C38, C102, and C132.

Belongs to the complex I 20 kDa subunit family. NDH-1 is composed of 14 different subunits. Subunits NuoB, C, D, E, F, and G constitute the peripheral sector of the complex. It depends on [4Fe-4S] cluster as a cofactor.

Its subcellular location is the cell inner membrane. It carries out the reaction a quinone + NADH + 5 H(+)(in) = a quinol + NAD(+) + 4 H(+)(out). In terms of biological role, NDH-1 shuttles electrons from NADH, via FMN and iron-sulfur (Fe-S) centers, to quinones in the respiratory chain. Couples the redox reaction to proton translocation (for every two electrons transferred, four hydrogen ions are translocated across the cytoplasmic membrane), and thus conserves the redox energy in a proton gradient. The chain is NADH-quinone oxidoreductase subunit B from Dechloromonas aromatica (strain RCB).